A 454-amino-acid polypeptide reads, in one-letter code: Replicative DNA helicase DnaC (454 aa).

The 267-residue stretch at 179–445 folds into the SF4 helicase domain; sequence RKGDITGIPT…NKFVNLERRF (267 aa). An ATP-binding site is contributed by 210–217; the sequence is ARPSVGKT.

This sequence belongs to the helicase family. DnaB subfamily. In terms of assembly, the DNA replisome assembles sequentially on oriC in this order; DnaA, DnaD, DnaB, DnaI-DnaC helicase. Monomer in the absence of ATP, in its presence forms a probable homohexamer which is not active as a helicase in vitro. Interacts separately and simultaneously with helicase loaders DnaB and DnaI. Interaction with DnaB does not require ATP. Interaction with DnaI requires ATP, probably forms a DnaC(6):DnaI(6) complex, which is not active as a helicase.

The protein resides in the cytoplasm. It localises to the nucleoid. It carries out the reaction Couples ATP hydrolysis with the unwinding of duplex DNA at the replication fork by translocating in the 5'-3' direction. This creates two antiparallel DNA single strands (ssDNA). The leading ssDNA polymer is the template for DNA polymerase III holoenzyme which synthesizes a continuous strand.. The enzyme catalyses ATP + H2O = ADP + phosphate + H(+). In terms of biological role, the main replicative DNA helicase, it participates in initiation and elongation during chromosome replication. Travels ahead of the DNA replisome, separating dsDNA into templates for DNA synthesis. The monomer has helicase activity in the presence of DnaI which is further increased by DnaB; the purified oligomeric form (probably a DnaC hexamer) does not have helicase activity in vitro, nor does the DnaC(6):DnaI(6) complex. The direction was not determined but is probably 5'-3'. Helicase activity requires an rNTP and is inactive with dNTPs. Has weak ATPase activity as a monomer, as an oligomer has ATPase activity which is stimulated by single-stranded (ss)DNA and further stimulated by DnaI and more by DnaB. Functionally, deletion of a single T residue in the promoter region (a run of 8 Ts becomes 7 Ts) decreases the helicase levels by 50%, decreasing DNA replication inititation during fast growth in rich medium. Suppresses the synthetic lethality of a dnaA1-yabA deletion for growth on rich medium. In Bacillus subtilis (strain 168), this protein is Replicative DNA helicase DnaC.